Here is a 315-residue protein sequence, read N- to C-terminus: Secreted frizzled-related protein 3 (315 aa).

The signal sequence occupies residues 1 to 21 (MWRGLPALALAALLLLGRAPA). The FZ domain maps to 22-142 (GRAAACEPVR…LYDRGVCISP (121 aa)). Disulfide bonds link Cys27–Cys88, Cys35–Cys81, Cys72–Cys111, Cys100–Cys139, and Cys104–Cys128. N-linked (GlcNAc...) asparagine glycosylation is present at Asn41. An NTR domain is found at 170–290 (CKCKPIKATQ…WDQKLRHLGK (121 aa)). The disordered stretch occupies residues 284–315 (KLRHLGKGKGEPGQSDSALKTGKPGNARQTRS).

Belongs to the secreted frizzled-related protein (sFRP) family.

The protein resides in the secreted. Functionally, soluble frizzled-related proteins (sFRPS) function as modulators of Wnt signaling through direct interaction with Wnts. They have a role in regulating cell growth and differentiation in specific cell types. SFRP3/FRZB appears to be involved in limb skeletogenesis. Antagonist of Wnt8 signaling. Regulates chondrocyte maturation and long bone development. This chain is Secreted frizzled-related protein 3 (FRZB), found in Gallus gallus (Chicken).